The sequence spans 589 residues: Cytochrome P450 monooxygenase TRI13 (589 aa).

The signal sequence occupies residues 1–21; the sequence is MFLSLCLMVLALYLLYKWALP. Asn-52, Asn-219, Asn-243, and Asn-366 each carry an N-linked (GlcNAc...) asparagine glycan. Residue Cys-531 coordinates heme.

Belongs to the cytochrome P450 family. It depends on heme as a cofactor.

It participates in sesquiterpene biosynthesis; trichothecene biosynthesis. Functionally, cytochrome P450 monooxygenase; part of the core gene cluster that mediates the biosynthesis of trichothecenes, a very large family of chemically related bicyclic sesquiterpene compounds acting as mycotoxins, including T2-toxin. The biosynthesis of trichothecenes begins with the cyclization of farnesyl diphosphate to trichodiene and is catalyzed by the trichodiene synthase TRI5. Trichodiene undergoes a series of oxygenations catalyzed by the cytochrome P450 monooxygenase TRI4. TRI4 controls the addition of four oxygens at C-2, C-3, C-11, and the C-12, C-13-epoxide to form the intermediate isotrichotriol. Isotrichotriol then undergoes a non-enzymatic isomerization and cyclization to form isotrichodermol. During this process, the oxygen at the C-2 position becomes the pyran ring oxygen and the hydroxyl group at C-11 is lost. More complex type A trichothecenes are built by modifying isotrichodermol through a series of paired hydroxylation and acetylation or acylation steps. Isotrichodermol is converted to isotrichodermin by the acetyltransferase TRI101. TRI101 encodes a C-3 transacetylase that acts as a self-protection or resistance factor during biosynthesis and that the presence of a free C-3 hydroxyl group is a key component of Fusarium trichothecene phytotoxicity. A second hydroxyl group is added to C-15 by the trichothecene C-15 hydroxylase TRI11, producing 15-decalonectrin, which is then acetylated by TRI3, producing calonectrin. A third hydroxyl group is added at C-4 by the cytochrome P450 monooxygenase TRI13, converting calonectrin to 3,15-diacetoxyspirpenol, which is subsequently acetylated by the acetyltransferase TRI7. A fourth hydroxyl group is added to C-8 by the cytochrome P450 monooxygenase TRI1, followed by the addition of an isovaleryl moiety by TRI16. Finally, the acetyl group is removed from the C-3 position by the trichothecene C-3 esterase TRI8 to produce T-2 toxin. This is Cytochrome P450 monooxygenase TRI13 from Fusarium sporotrichioides.